A 1580-amino-acid polypeptide reads, in one-letter code: Pentafunctional AROM polypeptide (1580 aa).

The tract at residues 1–381 is 3-dehydroquinate synthase; it reads MATPTVIKIL…HEQKASVVSN (381 aa). NAD(+)-binding positions include 44-46, 81-84, 114-116, and D119; these read DTT, EVSK, and GGV. A 7-phospho-2-dehydro-3-deoxy-D-arabino-heptonate-binding site is contributed by R130. Residue 139-140 participates in NAD(+) binding; that stretch reads TT. The 7-phospho-2-dehydro-3-deoxy-D-arabino-heptonate site is built by D146 and K152. K161 contacts NAD(+). Residue N162 coordinates 7-phospho-2-dehydro-3-deoxy-D-arabino-heptonate. NAD(+) contacts are provided by residues 179–182 and N190; that span reads FLNT. E194 contributes to the Zn(2+) binding site. Position 247 (K247) interacts with 7-phospho-2-dehydro-3-deoxy-D-arabino-heptonate. The active-site Proton acceptor; for 3-dehydroquinate synthase activity is E257. Residues 261–265 and H268 each bind 7-phospho-2-dehydro-3-deoxy-D-arabino-heptonate; that span reads RNLLN. Residue H268 coordinates Zn(2+). H272 (proton acceptor; for 3-dehydroquinate synthase activity) is an active-site residue. 7-phospho-2-dehydro-3-deoxy-D-arabino-heptonate-binding residues include H284 and K353. H284 lines the Zn(2+) pocket. Positions 394–838 are EPSP synthase; sequence VSPGVPHALE…WDTLAQLFKA (445 aa). Catalysis depends on C820, which acts as the For EPSP synthase activity. Positions 857–1048 are shikimate kinase; the sequence is ASLFIIGMRG…KKKPQSFFVS (192 aa). ATP is bound at residue 863–870; it reads GMRGAGKT. Residues 1049-1269 are 3-dehydroquinase; it reads LTLPDLRPSV…AAPGQLSAKE (221 aa). H1172 acts as the Proton acceptor; for 3-dehydroquinate dehydratase activity in catalysis. Residue K1200 is the Schiff-base intermediate with substrate; for 3-dehydroquinate dehydratase activity of the active site. Residues 1282–1580 form a shikimate dehydrogenase region; it reads SKKFAIVGKP…AAVMNADADI (299 aa).

It in the N-terminal section; belongs to the sugar phosphate cyclases superfamily. Dehydroquinate synthase family. The protein in the 2nd section; belongs to the EPSP synthase family. In the 3rd section; belongs to the shikimate kinase family. This sequence in the 4th section; belongs to the type-I 3-dehydroquinase family. It in the C-terminal section; belongs to the shikimate dehydrogenase family. In terms of assembly, homodimer. Requires Zn(2+) as cofactor.

Its subcellular location is the cytoplasm. It catalyses the reaction 7-phospho-2-dehydro-3-deoxy-D-arabino-heptonate = 3-dehydroquinate + phosphate. The enzyme catalyses 3-dehydroquinate = 3-dehydroshikimate + H2O. The catalysed reaction is shikimate + NADP(+) = 3-dehydroshikimate + NADPH + H(+). It carries out the reaction shikimate + ATP = 3-phosphoshikimate + ADP + H(+). It catalyses the reaction 3-phosphoshikimate + phosphoenolpyruvate = 5-O-(1-carboxyvinyl)-3-phosphoshikimate + phosphate. It participates in metabolic intermediate biosynthesis; chorismate biosynthesis; chorismate from D-erythrose 4-phosphate and phosphoenolpyruvate: step 2/7. Its pathway is metabolic intermediate biosynthesis; chorismate biosynthesis; chorismate from D-erythrose 4-phosphate and phosphoenolpyruvate: step 3/7. The protein operates within metabolic intermediate biosynthesis; chorismate biosynthesis; chorismate from D-erythrose 4-phosphate and phosphoenolpyruvate: step 4/7. It functions in the pathway metabolic intermediate biosynthesis; chorismate biosynthesis; chorismate from D-erythrose 4-phosphate and phosphoenolpyruvate: step 5/7. It participates in metabolic intermediate biosynthesis; chorismate biosynthesis; chorismate from D-erythrose 4-phosphate and phosphoenolpyruvate: step 6/7. Its function is as follows. The AROM polypeptide catalyzes 5 consecutive enzymatic reactions in prechorismate polyaromatic amino acid biosynthesis. The polypeptide is Pentafunctional AROM polypeptide (Uncinocarpus reesii (strain UAMH 1704)).